The chain runs to 533 residues: Basal body-orientation factor 1 (533 aa).

Positions 1–30 are disordered; that stretch reads MPAKDKRKDKRKDKRKGKNKGKEPKKIIKS. Residues 7-19 show a composition bias toward basic residues; the sequence is RKDKRKDKRKGKN. Over residues 20-30 the composition is skewed to basic and acidic residues; the sequence is KGKEPKKIIKS. Coiled-coil stretches lie at residues 34 to 207 and 246 to 368; these read AIER…EAEK and LKEA…VEQF. Residues 277 to 533 are interaction with MNS1 and ODF2; it reads VKEKIMQLTQ…PQGLQDSDIA (257 aa). Residues 507–517 are compositionally biased toward polar residues; it reads QQAPVSDSNRM. The disordered stretch occupies residues 507–533; that stretch reads QQAPVSDSNRMVSPDVIPQGLQDSDIA.

Belongs to the BBOF1 family. As to quaternary structure, interacts with MNS1 and ODF2. In terms of tissue distribution, expressed exclusively in the testis and predominantly expressed in male germ cells.

The protein localises to the cytoplasm. It is found in the cytoskeleton. It localises to the cilium basal body. Its subcellular location is the flagellum axoneme. Functionally, plays an essential role in sperm motility and male fertility by stabilizing the sperm flagellar axonemal structure. May be required for the stability of ODF2 and MANS1 proteins. Dispensable for the assembly and function of motile cilia. The chain is Basal body-orientation factor 1 from Mus musculus (Mouse).